The chain runs to 348 residues: Dihydroorotase (348 aa).

Zn(2+) contacts are provided by His17 and His19. Residues 19 to 21 and Asn45 contribute to the substrate site; that span reads HLR. Residues Lys103, His140, and His178 each coordinate Zn(2+). Lys103 is modified (N6-carboxylysine). Residue His140 participates in substrate binding. A substrate-binding site is contributed by Leu223. Asp251 is a binding site for Zn(2+). Asp251 is a catalytic residue. Substrate-binding residues include His255 and Ala267.

This sequence belongs to the metallo-dependent hydrolases superfamily. DHOase family. Class II DHOase subfamily. In terms of assembly, homodimer. The cofactor is Zn(2+).

The enzyme catalyses (S)-dihydroorotate + H2O = N-carbamoyl-L-aspartate + H(+). Its pathway is pyrimidine metabolism; UMP biosynthesis via de novo pathway; (S)-dihydroorotate from bicarbonate: step 3/3. Functionally, catalyzes the reversible cyclization of carbamoyl aspartate to dihydroorotate. In Shigella boydii serotype 4 (strain Sb227), this protein is Dihydroorotase.